The sequence spans 181 residues: ATP-dependent protease subunit HslV (181 aa).

T7 is an active-site residue. Residues A162, C165, and T168 each coordinate Na(+).

It belongs to the peptidase T1B family. HslV subfamily. A double ring-shaped homohexamer of HslV is capped on each side by a ring-shaped HslU homohexamer. The assembly of the HslU/HslV complex is dependent on binding of ATP.

It localises to the cytoplasm. The catalysed reaction is ATP-dependent cleavage of peptide bonds with broad specificity.. Allosterically activated by HslU binding. In terms of biological role, protease subunit of a proteasome-like degradation complex believed to be a general protein degrading machinery. The chain is ATP-dependent protease subunit HslV from Coxiella burnetii (strain RSA 493 / Nine Mile phase I).